The sequence spans 104 residues: L-rhamnose mutarotase (104 aa).

Tyr-18 is a binding site for substrate. Catalysis depends on His-22, which acts as the Proton donor. Substrate is bound by residues Tyr-41 and 76-77 (WW).

It belongs to the rhamnose mutarotase family. Homodimer.

The protein resides in the cytoplasm. It carries out the reaction alpha-L-rhamnose = beta-L-rhamnose. The protein operates within carbohydrate metabolism; L-rhamnose metabolism. Involved in the anomeric conversion of L-rhamnose. The sequence is that of L-rhamnose mutarotase from Clostridium beijerinckii (strain ATCC 51743 / NCIMB 8052) (Clostridium acetobutylicum).